Here is a 502-residue protein sequence, read N- to C-terminus: ATP synthase subunit alpha (502 aa).

Residue 169–176 (GDRQTGKT) coordinates ATP.

This sequence belongs to the ATPase alpha/beta chains family. In terms of assembly, F-type ATPases have 2 components, CF(1) - the catalytic core - and CF(0) - the membrane proton channel. CF(1) has five subunits: alpha(3), beta(3), gamma(1), delta(1), epsilon(1). CF(0) has three main subunits: a(1), b(2) and c(9-12). The alpha and beta chains form an alternating ring which encloses part of the gamma chain. CF(1) is attached to CF(0) by a central stalk formed by the gamma and epsilon chains, while a peripheral stalk is formed by the delta and b chains.

It is found in the cell membrane. The enzyme catalyses ATP + H2O + 4 H(+)(in) = ADP + phosphate + 5 H(+)(out). Produces ATP from ADP in the presence of a proton gradient across the membrane. The alpha chain is a regulatory subunit. The polypeptide is ATP synthase subunit alpha (Priestia megaterium (strain ATCC 12872 / QMB1551) (Bacillus megaterium)).